Here is a 299-residue protein sequence, read N- to C-terminus: Palmitoyltransferase ZDHHC3 (299 aa).

Residues 1 to 47 (MMLIPTHHFRNIERKPEYLQPEKCVPPPYPGPVGTMWFIRDGCGIAC) are Cytoplasmic-facing. At tyrosine 18 the chain carries Phosphotyrosine. A helical transmembrane segment spans residues 48-68 (AIVTWFLVLYAEFVVLFVMLI). Topologically, residues 69–72 (PSRD) are extracellular. Residues 73–93 (YVYSIINGIVFNLLAFLALAS) form a helical membrane-spanning segment. The Cytoplasmic segment spans residues 94–171 (HCRAMLTDPG…NCVGENNQKY (78 aa)). The 51-residue stretch at 127–177 (YKCPKCCSIKPDRAHHCSVCKRCIRKMDHHCPWVNNCVGENNQKYFVLFTM) folds into the DHHC domain. A lipid anchor (S-palmitoyl cysteine) is attached at cysteine 146. Cysteine 157 (S-palmitoyl cysteine intermediate) is an active-site residue. Residues 172-192 (FVLFTMYIALISLHALIMVGF) traverse the membrane as a helical segment. At 193 to 214 (HFLHCFEEDWTKCSSFSPPTTV) the chain is on the extracellular side. Residues 215-235 (ILLILLCFEGLLFLIFTSVMF) form a helical membrane-spanning segment. Over 236 to 299 (GTQVHSICTD…GKADPYQYVV (64 aa)) the chain is Cytoplasmic.

Belongs to the DHHC palmitoyltransferase family. As to quaternary structure, monomer. Homooligomers. The monomeric form has a higher catalytic activity. Forms heterooligomers with ZDHHC7. Interacts with TNFRSF10A. Post-translationally, autopalmitoylated. Phosphorylation by FGFR1 and SRC probably regulates the palmitoyltransferase activity. As to expression, widely expressed with significant expression in heart, lung, liver, skeletal muscle, kidney, testis, thymus, small intestine and leukocyte.

Its subcellular location is the golgi apparatus membrane. It catalyses the reaction L-cysteinyl-[protein] + hexadecanoyl-CoA = S-hexadecanoyl-L-cysteinyl-[protein] + CoA. The catalysed reaction is L-cysteinyl-[protein] + tetradecanoyl-CoA = S-tetradecanoyl-L-cysteinyl-[protein] + CoA. It carries out the reaction L-cysteinyl-[protein] + octadecanoyl-CoA = S-octadecanoyl-L-cysteinyl-[protein] + CoA. Golgi-localized palmitoyltransferase that catalyzes the addition of palmitate onto various protein substrates. Has no stringent fatty acid selectivity and in addition to palmitate can also transfer onto target proteins myristate from tetradecanoyl-CoA and stearate from octadecanoyl-CoA. Plays an important role in G protein-coupled receptor signaling pathways involving GNAQ and potentially other heterotrimeric G proteins by regulating their dynamic association with the plasma membrane. Palmitoylates ITGA6 and ITGB4, thereby regulating the alpha-6/beta-4 integrin localization, expression and function in cell adhesion to laminin. Plays a role in the TRAIL-activated apoptotic signaling pathway most probably through the palmitoylation and localization to the plasma membrane of TNFRSF10A. In the brain, by palmitoylating the gamma subunit GABRG2 of GABA(A) receptors and regulating their postsynaptic accumulation, plays a role in synaptic GABAergic inhibitory function and GABAergic innervation. Palmitoylates the neuronal protein GAP43 which is also involved in the formation of GABAergic synapses. Palmitoylates NCDN thereby regulating its association with endosome membranes. Probably palmitoylates PRCD and is involved in its proper localization within the photoreceptor. Could mediate the palmitoylation of NCAM1 and regulate neurite outgrowth. Could palmitoylate DNAJC5 and regulate its localization to Golgi membranes. Also constitutively palmitoylates DLG4. May also palmitoylate SNAP25. Could palmitoylate the glutamate receptors GRIA1 and GRIA2 but this has not been confirmed in vivo. Could also palmitoylate the D(2) dopamine receptor DRD2. May also palmitoylate LAMTOR1, promoting its localization to lysosomal membranes. Palmitoylates the Toll-like receptor 9/TLR9 in the Golgi and thereby regulates TLR9 trafficking to endosomes. May palmitoylate CALHM1 and CALHM3 subunits of gustatory voltage-gated ion channels and modulate channel gating and kinetics. Functionally, may also function as a calcium transporter. This is Palmitoyltransferase ZDHHC3 from Homo sapiens (Human).